We begin with the raw amino-acid sequence, 402 residues long: Arginine biosynthesis bifunctional protein ArgJ (402 aa).

Residues Thr-149, Lys-175, Thr-186, Glu-266, Asn-397, and Thr-402 each contribute to the substrate site. Residue Thr-186 is the Nucleophile of the active site.

Belongs to the ArgJ family. As to quaternary structure, heterotetramer of two alpha and two beta chains.

It localises to the cytoplasm. The catalysed reaction is N(2)-acetyl-L-ornithine + L-glutamate = N-acetyl-L-glutamate + L-ornithine. It carries out the reaction L-glutamate + acetyl-CoA = N-acetyl-L-glutamate + CoA + H(+). The protein operates within amino-acid biosynthesis; L-arginine biosynthesis; L-ornithine and N-acetyl-L-glutamate from L-glutamate and N(2)-acetyl-L-ornithine (cyclic): step 1/1. Its pathway is amino-acid biosynthesis; L-arginine biosynthesis; N(2)-acetyl-L-ornithine from L-glutamate: step 1/4. Catalyzes two activities which are involved in the cyclic version of arginine biosynthesis: the synthesis of N-acetylglutamate from glutamate and acetyl-CoA as the acetyl donor, and of ornithine by transacetylation between N(2)-acetylornithine and glutamate. The protein is Arginine biosynthesis bifunctional protein ArgJ of Prochlorococcus marinus subsp. pastoris (strain CCMP1986 / NIES-2087 / MED4).